A 553-amino-acid polypeptide reads, in one-letter code: Probable glucomannan 4-beta-mannosyltransferase 1 (553 aa).

The chain crosses the membrane as a helical span at residues 64–84; the sequence is LLPVFKGLVVMCLVLSIIVFF. Residue Asp-163 is part of the active site. Substrate is bound by residues Asp-222 and Asp-224. Asp-316 is a catalytic residue. 4 helical membrane-spanning segments follow: residues 395-415, 431-451, 510-530, and 531-551; these read VAVH…SVFF, LISI…IFWV, EVMV…YGHT, and WLHF…FGFV.

The protein belongs to the glycosyltransferase 2 family. Plant cellulose synthase-like A subfamily.

The protein localises to the golgi apparatus membrane. The catalysed reaction is GDP-mannose + (glucomannan)n = GDP + (glucomannan)n+1.. Its function is as follows. Probable mannan synthase which consists of a 4-beta-mannosyltransferase activity on mannan using GDP-mannose. The beta-1,4-mannan product is the backbone for galactomannan synthesis by galactomannan galactosyltransferase. Galactomannan is a noncellulosic polysaccharides of plant cell wall. This Arabidopsis thaliana (Mouse-ear cress) protein is Probable glucomannan 4-beta-mannosyltransferase 1.